The following is a 305-amino-acid chain: MSAIDKYAVKQFLMSLQDSICQQLEQEDGKAVFVEDAWHREPGERLGGGGRSRVLRDGLVFEQGGVNFSHVEGKEMPASATAHRPELAGRRFEAMGVSLVIHPKNPYVPTSHANVRFFIAEKEGEEPIWWFGGGFDLTPFYPFEEDCQSWHDTAKAICAPFGEDVYAEHKAWCDKYFFLPHRNETRGVGGLFFDDLNHWEFDKCFDYIKAVGEGYCQAYLPIVSRRKDIEYGEREREFQLYRRGRYVEFNLVYDRGTLFGLQSGGRTESILMSMPPLARWEYRYEPEAGTPEAELYERYLKPREW.

Ser-98 provides a ligand contact to substrate. A divalent metal cation is bound by residues His-102 and His-112. His-112 acts as the Proton donor in catalysis. 114–116 (NVR) provides a ligand contact to substrate. A divalent metal cation contacts are provided by His-151 and His-181. Residues 246-281 (YVEFNLVYDRGTLFGLQSGGRTESILMSMPPLARWE) are important for dimerization. 264–266 (GGR) provides a ligand contact to substrate.

Belongs to the aerobic coproporphyrinogen-III oxidase family. In terms of assembly, homodimer. Requires a divalent metal cation as cofactor.

It is found in the cytoplasm. The enzyme catalyses coproporphyrinogen III + O2 + 2 H(+) = protoporphyrinogen IX + 2 CO2 + 2 H2O. The protein operates within porphyrin-containing compound metabolism; protoporphyrin-IX biosynthesis; protoporphyrinogen-IX from coproporphyrinogen-III (O2 route): step 1/1. Functionally, involved in the heme biosynthesis. Catalyzes the aerobic oxidative decarboxylation of propionate groups of rings A and B of coproporphyrinogen-III to yield the vinyl groups in protoporphyrinogen-IX. This chain is Oxygen-dependent coproporphyrinogen-III oxidase, found in Vibrio parahaemolyticus serotype O3:K6 (strain RIMD 2210633).